Consider the following 254-residue polypeptide: UPF0246 protein lpp1320 (254 aa).

Belongs to the UPF0246 family.

This is UPF0246 protein lpp1320 from Legionella pneumophila (strain Paris).